We begin with the raw amino-acid sequence, 102 residues long: Protein RnfH (102 aa).

The protein belongs to the UPF0125 (RnfH) family.

This chain is Protein RnfH, found in Pseudomonas entomophila (strain L48).